Reading from the N-terminus, the 103-residue chain is Small ribosomal subunit protein uS10 (103 aa).

The protein belongs to the universal ribosomal protein uS10 family. As to quaternary structure, part of the 30S ribosomal subunit.

In terms of biological role, involved in the binding of tRNA to the ribosomes. The chain is Small ribosomal subunit protein uS10 from Shewanella denitrificans (strain OS217 / ATCC BAA-1090 / DSM 15013).